Consider the following 409-residue polypeptide: MYVRRLRRERSNQAIADYLGSNGYTDALEAFRKEADMPNEIERKYGGLLEKKWTSVIRLQKKVMELEAKLSEAEKEAIEGAPTKAKRTPTDWIPRPPEKFALAGHRATVTRVVFHPVFSMMASASEDATIKIWDFETGEYERTLKGHTDSVQDLAFDSHGKLLASCSSDLSIKLWDFQQTFECVKTMHGHDHNVSSVSFVPAGDYLLSASRDKTIKMWEVATGYCVKTFTGHREWVRMVRVNVDGSLMASCSNDHSVRVWQTNSKECKAELREHENTVECIAWAPESAAAAINEAAGADNKKGAHQGPFLASGSRDKTIRVWDVNSGLCLFTLVGHDNWVRGIVFHPGGKYMLSASDDKTLRIWDLRNKRCMKTLYAHSHFCTSLDMHKSHPYVISGSVDTTVKVWECR.

One can recognise a LisH domain in the interval Arg-7–Asn-39. Positions Thr-54 to Ala-81 form a coiled coil. 7 WD repeats span residues Gly-104–Lys-145, Gly-146–Lys-185, Gly-189–Thr-228, Gly-231–Glu-270, Glu-273–Thr-332, Gly-335–Thr-374, and Ala-377–Arg-409.

This sequence belongs to the WD repeat LIS1/nudF family.

Its subcellular location is the cytoplasm. It localises to the cytoskeleton. It is found in the microtubule organizing center. The protein resides in the centrosome. Functionally, positively regulates the activity of the minus-end directed microtubule motor protein dynein. May enhance dynein-mediated microtubule sliding by targeting dynein to the microtubule plus end. Required for several dynein- and microtubule-dependent processes. In Aedes aegypti (Yellowfever mosquito), this protein is Lissencephaly-1 homolog.